The chain runs to 120 residues: Putative membrane protein insertion efficiency factor (120 aa).

The segment at 93-120 (GRSCQTDVDGANDDWNPASKRGERESFV) is disordered.

The protein belongs to the UPF0161 family.

The protein localises to the cell membrane. In terms of biological role, could be involved in insertion of integral membrane proteins into the membrane. In Mycobacterium bovis (strain ATCC BAA-935 / AF2122/97), this protein is Putative membrane protein insertion efficiency factor.